The following is a 289-amino-acid chain: Membrane protein insertase YidC (289 aa).

Residues 1–19 form the signal peptide; that stretch reads MKKKALLPLLLGIMVFLAG. The N-palmitoyl cysteine moiety is linked to residue Cys20. A lipid anchor (S-diacylglycerol cysteine) is attached at Cys20. Transmembrane regions (helical) follow at residues 55–75, 133–153, 177–197, 210–230, and 231–251; these read YGLA…PFML, MLGC…FFVL, IWIT…STFS, MIIS…ALGL, and YWSV…AYYS. Positions 268–289 are disordered; sequence EHGGSGNSKGAKVVSKKNKKKK.

Belongs to the OXA1/ALB3/YidC family. Type 2 subfamily.

It localises to the cell membrane. Required for the insertion and/or proper folding and/or complex formation of integral membrane proteins into the membrane. Involved in integration of membrane proteins that insert both dependently and independently of the Sec translocase complex, as well as at least some lipoproteins. The sequence is that of Membrane protein insertase YidC from Staphylococcus carnosus (strain TM300).